Here is a 482-residue protein sequence, read N- to C-terminus: tRNA sulfurtransferase (482 aa).

The region spanning 61 to 165 (PAIRDALTRI…NDRLLLVKGR (105 aa)) is the THUMP domain. ATP-binding positions include 183–184 (LI), K265, G287, and Q296. C344 and C456 are disulfide-bonded. Residues 404–482 (FGANDAILDI…GFSNVKVYRP (79 aa)) enclose the Rhodanese domain. C456 functions as the Cysteine persulfide intermediate in the catalytic mechanism.

This sequence belongs to the ThiI family.

The protein resides in the cytoplasm. It carries out the reaction [ThiI sulfur-carrier protein]-S-sulfanyl-L-cysteine + a uridine in tRNA + 2 reduced [2Fe-2S]-[ferredoxin] + ATP + H(+) = [ThiI sulfur-carrier protein]-L-cysteine + a 4-thiouridine in tRNA + 2 oxidized [2Fe-2S]-[ferredoxin] + AMP + diphosphate. The catalysed reaction is [ThiS sulfur-carrier protein]-C-terminal Gly-Gly-AMP + S-sulfanyl-L-cysteinyl-[cysteine desulfurase] + AH2 = [ThiS sulfur-carrier protein]-C-terminal-Gly-aminoethanethioate + L-cysteinyl-[cysteine desulfurase] + A + AMP + 2 H(+). It participates in cofactor biosynthesis; thiamine diphosphate biosynthesis. In terms of biological role, catalyzes the ATP-dependent transfer of a sulfur to tRNA to produce 4-thiouridine in position 8 of tRNAs, which functions as a near-UV photosensor. Also catalyzes the transfer of sulfur to the sulfur carrier protein ThiS, forming ThiS-thiocarboxylate. This is a step in the synthesis of thiazole, in the thiamine biosynthesis pathway. The sulfur is donated as persulfide by IscS. This chain is tRNA sulfurtransferase, found in Klebsiella pneumoniae subsp. pneumoniae (strain ATCC 700721 / MGH 78578).